Here is a 279-residue protein sequence, read N- to C-terminus: Protein FAM151B (279 aa).

Belongs to the menorin family.

Functionally, essential for survival of retinal photoreceptor cells. The chain is Protein FAM151B (Fam151b) from Mus musculus (Mouse).